The sequence spans 58 residues: Single-pass membrane and coiled-coil domain-containing protein 4 homolog (58 aa).

A coiled-coil region spans residues 1–31; it reads MRQLKGKVKETRKQKKERKLDNLETQAKIRT. The chain crosses the membrane as a helical span at residues 31 to 51; that stretch reads TVVLPALGVLAVFLVLFVYLK.

This sequence belongs to the SMCO4 family.

The protein resides in the membrane. In Drosophila melanogaster (Fruit fly), this protein is Single-pass membrane and coiled-coil domain-containing protein 4 homolog.